Reading from the N-terminus, the 234-residue chain is Venom allergen 3 (234 aa).

The N-terminal stretch at 1–22 (MELIVSILWLAITAENLANTLA) is a signal peptide. Disulfide bonds link cysteine 26/cysteine 41, cysteine 31/cysteine 125, cysteine 52/cysteine 118, and cysteine 198/cysteine 216. Residues 69–218 (VNKHNELRQR…WTKHYLVCNY (150 aa)) form the SCP domain. Residues 80–99 (ASGKEMRGTNGPQPPAVKMP) are disordered.

The protein belongs to the CRISP family. Expressed by the venom gland.

The protein resides in the secreted. In Solenopsis invicta (Red imported fire ant), this protein is Venom allergen 3.